Here is a 137-residue protein sequence, read N- to C-terminus: Large ribosomal subunit protein uL16 (137 aa).

Belongs to the universal ribosomal protein uL16 family. In terms of assembly, part of the 50S ribosomal subunit.

Its function is as follows. Binds 23S rRNA and is also seen to make contacts with the A and possibly P site tRNAs. This chain is Large ribosomal subunit protein uL16, found in Rhizobium etli (strain CIAT 652).